The primary structure comprises 341 residues: tRNA N6-adenosine threonylcarbamoyltransferase (341 aa).

2 residues coordinate Fe cation: H111 and H115. Residues 134 to 138 (LVSGG), D167, G180, and N276 each bind substrate. D304 serves as a coordination point for Fe cation.

The protein belongs to the KAE1 / TsaD family. It depends on Fe(2+) as a cofactor.

The protein resides in the cytoplasm. The enzyme catalyses L-threonylcarbamoyladenylate + adenosine(37) in tRNA = N(6)-L-threonylcarbamoyladenosine(37) in tRNA + AMP + H(+). Required for the formation of a threonylcarbamoyl group on adenosine at position 37 (t(6)A37) in tRNAs that read codons beginning with adenine. Is involved in the transfer of the threonylcarbamoyl moiety of threonylcarbamoyl-AMP (TC-AMP) to the N6 group of A37, together with TsaE and TsaB. TsaD likely plays a direct catalytic role in this reaction. In Alteromonas mediterranea (strain DSM 17117 / CIP 110805 / LMG 28347 / Deep ecotype), this protein is tRNA N6-adenosine threonylcarbamoyltransferase.